The primary structure comprises 173 residues: Photosystem I assembly protein Ycf3 (173 aa).

3 TPR repeats span residues 35–68 (AFVYYRDGMSAQADGEYAEALDNYEEALRLEENP), 72–105 (SYILYNMALIHASNGDHEKALGLYQEAIELNPKM), and 120–153 (GEKAKEAGQEDDAENLFDKAAEYWKQAIRLAPNN).

It belongs to the Ycf3 family.

The protein resides in the cellular thylakoid membrane. In terms of biological role, essential for the assembly of the photosystem I (PSI) complex. May act as a chaperone-like factor to guide the assembly of the PSI subunits. The chain is Photosystem I assembly protein Ycf3 from Synechocystis sp. (strain ATCC 27184 / PCC 6803 / Kazusa).